A 115-amino-acid chain; its full sequence is Cholecystokinin (115 aa).

Positions 1-20 (MNSGVCLCVLMAVLAAGALT) are cleaved as a signal peptide. A propeptide spanning residues 21-44 (QPVPPADPAGSGLQRAEEAPRRQL) is cleaved from the precursor. The segment at 23–52 (VPPADPAGSGLQRAEEAPRRQLRVSQRTDG) is disordered. An O-linked (Xyl...) (chondroitin sulfate) serine glycan is attached at Ser-31. Tyr-97 is modified (sulfotyrosine). Phe-103 carries the post-translational modification Phenylalanine amide. Positions 107 to 115 (SAEEYEYPS) are excised as a propeptide. Sulfotyrosine occurs at positions 111 and 113.

This sequence belongs to the gastrin/cholecystokinin family. As to quaternary structure, binds to CCK-A receptors in the pancreas and CCK-B receptors in the brain. Post-translationally, the precursor is cleaved by proteases to produce a number of active cholecystokinins. The precursor is cleaved by ACE, which removes the Gly-Arg-Arg peptide at the C-terminus, leading to mature hormone. In terms of tissue distribution, detected in cerebrospinal fluid and urine (at protein level).

The protein localises to the secreted. Functionally, this peptide hormone induces gall bladder contraction and the release of pancreatic enzymes in the gut. Its function in the brain is not clear. Binding to CCK-A receptors stimulates amylase release from the pancreas, binding to CCK-B receptors stimulates gastric acid secretion. This Homo sapiens (Human) protein is Cholecystokinin (CCK).